Reading from the N-terminus, the 400-residue chain is Glutamyl-tRNA reductase (400 aa).

Residues Thr45–Arg48, Ser103, Glu108–Gln110, and Gln114 contribute to the substrate site. Cys46 functions as the Nucleophile in the catalytic mechanism. Gly179–Gly184 contributes to the NADP(+) binding site.

Belongs to the glutamyl-tRNA reductase family. In terms of assembly, homodimer.

It carries out the reaction (S)-4-amino-5-oxopentanoate + tRNA(Glu) + NADP(+) = L-glutamyl-tRNA(Glu) + NADPH + H(+). The protein operates within porphyrin-containing compound metabolism; protoporphyrin-IX biosynthesis; 5-aminolevulinate from L-glutamyl-tRNA(Glu): step 1/2. Catalyzes the NADPH-dependent reduction of glutamyl-tRNA(Glu) to glutamate 1-semialdehyde (GSA). In Clostridium perfringens (strain ATCC 13124 / DSM 756 / JCM 1290 / NCIMB 6125 / NCTC 8237 / Type A), this protein is Glutamyl-tRNA reductase.